We begin with the raw amino-acid sequence, 2561 residues long: Squalestatin hexaketide synthase (2561 aa).

The interval Met-1 to Phe-77 is disordered. Residues Asn-20–Thr-74 are compositionally biased toward low complexity. In terms of domain architecture, Ketosynthase family 3 (KS3) spans Gln-83–Ser-503. Active-site for beta-ketoacyl synthase activity residues include Cys-253, His-390, and His-427. Residues Phe-603–Phe-925 form a malonyl-CoA:ACP transacylase (MAT) domain region. The segment at His-972–Ser-1101 is N-terminal hotdog fold. Residues His-972 to Glu-1253 form a dehydratase (DH) domain region. The 286-residue stretch at His-972 to Gln-1257 folds into the PKS/mFAS DH domain. Catalysis depends on His-1004, which acts as the Proton acceptor; for dehydratase activity. Positions Thr-1112 to Gln-1257 are C-terminal hotdog fold. Asp-1174 acts as the Proton donor; for dehydratase activity in catalysis. The segment at Ser-1421–Leu-1599 is methyltransferase (CMet) domain. Residues Gly-1826–Val-2146 are enoyl reductase (ER) (ER) domain. Residues Ser-2170–Ile-2343 are ketoreductase (KR) domain. A Carrier domain is found at Val-2472–Leu-2550. Ser-2509 is subject to O-(pantetheine 4'-phosphoryl)serine.

It functions in the pathway secondary metabolite biosynthesis. Its function is as follows. Highly reducing polyketide synthase (HR-PKS); part of the gene cluster that mediates the biosynthesis of squalestatin S1 (SQS1, also known as zaragozic acid A), a heavily oxidized fungal polyketide that offers potent cholesterol lowering activity by targeting squalene synthase (SS). SQS1 is composed of a 2,8-dioxobicyclic[3.2.1]octane-3,4,5-tricarboxyclic acid core that is connected to two lipophilic polyketide arms. These initial steps feature the priming of an unusual benzoic acid starter unit onto the highly reducing polyketide synthase pks2, followed by oxaloacetate extension and product release to generate a tricarboxylic acid containing product. The phenylalanine ammonia lyase (PAL) M7 and the acyl-CoA ligase M9 are involved in transforming phenylalanine into benzoyl-CoA. The citrate synthase-like protein R3 is involved in connecting the C-alpha-carbons of the hexaketide chain and oxaloacetate to afford the tricarboxylic acid unit. The potential hydrolytic enzymes, M8 and M10, are in close proximity to pks2 and may participate in product release. On the other side, the tetraketide arm is synthesized by a the squalestatin tetraketide synthase pks1 and enzymatically esterified to the core in the last biosynthetic step, by the acetyltransferase M4. The biosynthesis of the tetraketide must involve 3 rounds of chain extension. After the first and second rounds methyl-transfer occurs, and in all rounds of extension the ketoreductase and dehydratase are active. The enoyl reductase and C-MeT of pks1 are not active in the final round of extension. The acetyltransferase M4 appears to have a broad substrate selectivity for its acyl CoA substrate, allowing the in vitro synthesis of novel squalestatins. The biosynthesis of SQS1 requires several oxidative steps likely performed by oxidoreductases M1, R1 and R2. Finally, in support of the identification of the cluster as being responsible for SQS1 production, the cluster contains a gene encoding a putative squalene synthase (SS) R6, suggesting a likely mechanism for self-resistance. The sequence is that of Squalestatin hexaketide synthase from Phoma sp. (strain ATCC 20986 / MF5453).